The chain runs to 445 residues: Probable protein phosphatase 2C 14 (445 aa).

The PPM-type phosphatase domain maps to 120–440 (GFGVVSRNGK…DDITVVIIDL (321 aa)). Mn(2+) is bound by residues Asp-156, Gly-157, and Asp-318. Residues 384–404 (NSENESPSLNREIGSSPSKSP) form a disordered region. Residues 390 to 404 (PSLNREIGSSPSKSP) are compositionally biased toward polar residues. Asp-431 is a binding site for Mn(2+).

This sequence belongs to the PP2C family. It depends on Mg(2+) as a cofactor. The cofactor is Mn(2+).

It catalyses the reaction O-phospho-L-seryl-[protein] + H2O = L-seryl-[protein] + phosphate. It carries out the reaction O-phospho-L-threonyl-[protein] + H2O = L-threonyl-[protein] + phosphate. This chain is Probable protein phosphatase 2C 14, found in Arabidopsis thaliana (Mouse-ear cress).